The following is a 738-amino-acid chain: RNA polymerase II degradation factor 1 (738 aa).

In terms of domain architecture, CUE spans 21–63 (ALKSKIDTLTELFPDWTSDDLIDIVQEYDDLETIIDKITSGAV). The span at 69 to 84 (VKKPAKKEKYEKKEQQ) shows a compositional bias: basic and acidic residues. Disordered stretches follow at residues 69-455 (VKKP…QQQQ), 467-503 (YLSQ…QGNN), and 640-688 (NGQE…QPVN). The span at 103–121 (KSSNNSNSFTSTKHNSSNN) shows a compositional bias: low complexity. The segment covering 211-220 (HNNKEEHKQI) has biased composition (basic and acidic residues). Residues 224–237 (SLSSKKTTSRTSAS) are compositionally biased toward low complexity. Over residues 256–291 (KKTESPLENVAELKKEISDIKKDDQKSEASEEKVNE) the composition is skewed to basic and acidic residues. Phosphoserine occurs at positions 260, 273, and 307. Acidic residues-rich tracts occupy residues 298 to 328 (EQEE…EAEE) and 337 to 358 (QTAE…EVTV). Position 338 is a phosphothreonine (Thr-338). Low complexity-rich tracts occupy residues 380 to 455 (VPQP…QQQQ) and 467 to 498 (YLSQ…PQSQ). Residues 500 to 530 (QGNNVAAQQYYMYQNQFPGYSYPGMFDSQGY) are contains the proteolytic activation cleavage site. Ser-646 carries the phosphoserine modification. Residues 660–688 (QKQSQQQQQQQPQGQPQPEVQMQNGQPVN) show a composition bias toward low complexity.

It belongs to the DEF1 family. In terms of assembly, homodimer; may form higher order oligomers. Interacts with the large RNA polymerase II subunit RPO21; the interaction is direct and serves to bridge RPO21 to the Elongin complex in a manner dependent on transcription stress. Interacts with RAD26. Ubiquitinated. In terms of processing, proteolytically cleaved by the proteasome in response to transcription stress; the resulting N-terminal form constitutes the activated nuclear form and the C-terminal portion is degraded.

It is found in the cytoplasm. Its subcellular location is the nucleus. The protein resides in the chromosome. It localises to the telomere. Recruits the ubiquitination machinery to RNA polymerase II for polyubiquitination, removal and degradation, when the transcription-coupled repair (TCR) factor RAD26 fails to efficiently displace stalled RNA polymerase II. Also involved in telomere length regulation. Binds DNA. This is RNA polymerase II degradation factor 1 (DEF1) from Saccharomyces cerevisiae (strain JAY291) (Baker's yeast).